The primary structure comprises 300 residues: Ribosomal protein L11 methyltransferase (300 aa).

S-adenosyl-L-methionine contacts are provided by Thr-152, Gly-173, Asp-195, and Asn-234.

The protein belongs to the methyltransferase superfamily. PrmA family.

The protein resides in the cytoplasm. It catalyses the reaction L-lysyl-[protein] + 3 S-adenosyl-L-methionine = N(6),N(6),N(6)-trimethyl-L-lysyl-[protein] + 3 S-adenosyl-L-homocysteine + 3 H(+). Its function is as follows. Methylates ribosomal protein L11. The sequence is that of Ribosomal protein L11 methyltransferase from Burkholderia orbicola (strain MC0-3).